The sequence spans 125 residues: uncharacterized protein (125 aa).

This is an uncharacterized protein from Methanocaldococcus jannaschii (strain ATCC 43067 / DSM 2661 / JAL-1 / JCM 10045 / NBRC 100440) (Methanococcus jannaschii).